The sequence spans 626 residues: tRNA uridine 5-carboxymethylaminomethyl modification enzyme MnmG (626 aa).

Position 13-18 (13-18 (GGGHAG)) interacts with FAD. Residue 273 to 287 (GPRYCPSIEDKIHRF) participates in NAD(+) binding.

This sequence belongs to the MnmG family. In terms of assembly, homodimer. Heterotetramer of two MnmE and two MnmG subunits. FAD is required as a cofactor.

It localises to the cytoplasm. Functionally, NAD-binding protein involved in the addition of a carboxymethylaminomethyl (cmnm) group at the wobble position (U34) of certain tRNAs, forming tRNA-cmnm(5)s(2)U34. This Acinetobacter baumannii (strain SDF) protein is tRNA uridine 5-carboxymethylaminomethyl modification enzyme MnmG.